The sequence spans 338 residues: DNA-directed RNA polymerase subunit alpha (338 aa).

The tract at residues 1–226 (MLIAQRPTLT…ELFGLTRELN (226 aa)) is alpha N-terminal domain (alpha-NTD). The segment at 243–338 (YAESLGTPVE…DDDYAETEQY (96 aa)) is alpha C-terminal domain (alpha-CTD). The tract at residues 319-338 (AAAEAYDEANDDDYAETEQY) is disordered. Over residues 323-338 (AYDEANDDDYAETEQY) the composition is skewed to acidic residues.

Belongs to the RNA polymerase alpha chain family. As to quaternary structure, homodimer. The RNAP catalytic core consists of 2 alpha, 1 beta, 1 beta' and 1 omega subunit. When a sigma factor is associated with the core the holoenzyme is formed, which can initiate transcription.

The enzyme catalyses RNA(n) + a ribonucleoside 5'-triphosphate = RNA(n+1) + diphosphate. In terms of biological role, DNA-dependent RNA polymerase catalyzes the transcription of DNA into RNA using the four ribonucleoside triphosphates as substrates. This chain is DNA-directed RNA polymerase subunit alpha, found in Cutibacterium acnes (strain DSM 16379 / KPA171202) (Propionibacterium acnes).